We begin with the raw amino-acid sequence, 512 residues long: Glycerol kinase 1 (512 aa).

Threonine 18 is a binding site for ADP. Residues threonine 18, threonine 19, and serine 20 each coordinate ATP. A sn-glycerol 3-phosphate-binding site is contributed by threonine 18. Arginine 22 contributes to the ADP binding site. Positions 88, 89, 140, and 255 each coordinate sn-glycerol 3-phosphate. Residues arginine 88, glutamate 89, tyrosine 140, aspartate 255, and glutamine 256 each contribute to the glycerol site. 2 residues coordinate ADP: threonine 277 and glycine 321. Residues threonine 277, glycine 321, glutamine 325, and glycine 422 each coordinate ATP. Glycine 422 and asparagine 426 together coordinate ADP.

The protein belongs to the FGGY kinase family.

The enzyme catalyses glycerol + ATP = sn-glycerol 3-phosphate + ADP + H(+). The protein operates within polyol metabolism; glycerol degradation via glycerol kinase pathway; sn-glycerol 3-phosphate from glycerol: step 1/1. Its activity is regulated as follows. Inhibited by fructose 1,6-bisphosphate (FBP). Its function is as follows. Key enzyme in the regulation of glycerol uptake and metabolism. Catalyzes the phosphorylation of glycerol to yield sn-glycerol 3-phosphate. The polypeptide is Glycerol kinase 1 (Streptomyces avermitilis (strain ATCC 31267 / DSM 46492 / JCM 5070 / NBRC 14893 / NCIMB 12804 / NRRL 8165 / MA-4680)).